A 200-amino-acid chain; its full sequence is Large ribosomal subunit protein uL4 (200 aa).

The interval 42 to 65 is disordered; the sequence is TRAQKTRSEVSGGGAKPWRQKGTG.

This sequence belongs to the universal ribosomal protein uL4 family. In terms of assembly, part of the 50S ribosomal subunit.

One of the primary rRNA binding proteins, this protein initially binds near the 5'-end of the 23S rRNA. It is important during the early stages of 50S assembly. It makes multiple contacts with different domains of the 23S rRNA in the assembled 50S subunit and ribosome. In terms of biological role, forms part of the polypeptide exit tunnel. In Aliivibrio fischeri (strain MJ11) (Vibrio fischeri), this protein is Large ribosomal subunit protein uL4.